A 264-amino-acid chain; its full sequence is Indole-3-glycerol phosphate synthase (264 aa).

Belongs to the TrpC family.

It catalyses the reaction 1-(2-carboxyphenylamino)-1-deoxy-D-ribulose 5-phosphate + H(+) = (1S,2R)-1-C-(indol-3-yl)glycerol 3-phosphate + CO2 + H2O. Its pathway is amino-acid biosynthesis; L-tryptophan biosynthesis; L-tryptophan from chorismate: step 4/5. This Rhizorhabdus wittichii (strain DSM 6014 / CCUG 31198 / JCM 15750 / NBRC 105917 / EY 4224 / RW1) (Sphingomonas wittichii) protein is Indole-3-glycerol phosphate synthase.